We begin with the raw amino-acid sequence, 425 residues long: Xyloglucan O-acetyltransferase 2 (425 aa).

Residues 1 to 18 (MGSPFKDHHTLHPSLVRK) lie on the Cytoplasmic side of the membrane. Residues 19–38 (LIPWTFYAMVPLVLFRVYLY) form a helical; Signal-anchor for type II membrane protein membrane-spanning segment. At 39 to 425 (PYPLHHTTTT…KWEYASRREQ (387 aa)) the chain is on the lumenal side. 4 disulfides stabilise this stretch: Cys-68–Cys-118, Cys-89–Cys-154, Cys-98–Cys-398, and Cys-313–Cys-394. Asn-85 carries an N-linked (GlcNAc...) asparagine glycan. The short motif at 141–143 (GDS) is the GDS motif element. Ser-143 functions as the Nucleophile in the catalytic mechanism. Residues Asn-183 and Asn-259 are each glycosylated (N-linked (GlcNAc...) asparagine). Asp-393 functions as the Proton donor in the catalytic mechanism. The DXXH motif signature appears at 393–396 (DCVH). The active-site Proton acceptor is the His-396.

Belongs to the PC-esterase family. TBL subfamily.

Its subcellular location is the golgi apparatus membrane. Its function is as follows. Xyloglucan acetyltransferase that catalyzes the acetylation of fucosylated Gal residues on xyloglucan side chains. Predominantly catalyze 6-O-monoacetylation of Gal residues in the Fuc-Gal-Xyl trisaccharide side chains of xyloglucan oligomers. The sequence is that of Xyloglucan O-acetyltransferase 2 from Populus trichocarpa (Western balsam poplar).